The following is a 71-amino-acid chain: MLNLVSLLLKKSIVIQLFDITVYKFKAKFWYKLPFETRLRIIKHTKPKALSATKQVKRDYRKTAILNSMRK.

This chain is Non-structural protein 3x, found in Canis lupus familiaris (Dog).